The primary structure comprises 182 residues: NAD(P)H-quinone oxidoreductase subunit I, chloroplastic (182 aa).

4Fe-4S ferredoxin-type domains are found at residues 55-84 and 95-124; these read GRIH…VDWK and LNYS…MTEE. The [4Fe-4S] cluster site is built by cysteine 64, cysteine 67, cysteine 70, cysteine 74, cysteine 104, cysteine 107, cysteine 110, and cysteine 114.

It belongs to the complex I 23 kDa subunit family. In terms of assembly, NDH is composed of at least 16 different subunits, 5 of which are encoded in the nucleus. [4Fe-4S] cluster is required as a cofactor.

The protein resides in the plastid. The protein localises to the chloroplast thylakoid membrane. The catalysed reaction is a plastoquinone + NADH + (n+1) H(+)(in) = a plastoquinol + NAD(+) + n H(+)(out). It catalyses the reaction a plastoquinone + NADPH + (n+1) H(+)(in) = a plastoquinol + NADP(+) + n H(+)(out). Its function is as follows. NDH shuttles electrons from NAD(P)H:plastoquinone, via FMN and iron-sulfur (Fe-S) centers, to quinones in the photosynthetic chain and possibly in a chloroplast respiratory chain. The immediate electron acceptor for the enzyme in this species is believed to be plastoquinone. Couples the redox reaction to proton translocation, and thus conserves the redox energy in a proton gradient. The chain is NAD(P)H-quinone oxidoreductase subunit I, chloroplastic from Buxus microphylla (Littleleaf boxwood).